Reading from the N-terminus, the 1195-residue chain is DNA-directed RNA polymerase subunit Rpo2 (1195 aa).

The span at 894–909 (LEEGEERLGPQRRRES) shows a compositional bias: basic and acidic residues. The segment at 894-914 (LEEGEERLGPQRRRESSVTMR) is disordered. Zn(2+) is bound by residues Cys-1135, Cys-1140, Cys-1155, and Cys-1158.

It belongs to the RNA polymerase beta chain family. As to quaternary structure, part of the RNA polymerase complex. Zn(2+) is required as a cofactor.

It is found in the cytoplasm. It catalyses the reaction RNA(n) + a ribonucleoside 5'-triphosphate = RNA(n+1) + diphosphate. Functionally, DNA-dependent RNA polymerase (RNAP) catalyzes the transcription of DNA into RNA using the four ribonucleoside triphosphates as substrates. This subunit is involved in DNA promoter recognition. The polypeptide is DNA-directed RNA polymerase subunit Rpo2 (Thermoplasma acidophilum (strain ATCC 25905 / DSM 1728 / JCM 9062 / NBRC 15155 / AMRC-C165)).